The following is a 297-amino-acid chain: Carbamate kinase (297 aa).

Belongs to the carbamate kinase family.

The protein resides in the cytoplasm. It catalyses the reaction hydrogencarbonate + NH4(+) + ATP = carbamoyl phosphate + ADP + H2O + H(+). The catalysed reaction is carbamate + ATP = carbamoyl phosphate + ADP. The enzyme catalyses hydrogencarbonate + NH4(+) = carbamate + H2O + H(+). Its pathway is nitrogen metabolism; (S)-allantoin degradation. Its function is as follows. Kinase involved in the anaerobic nitrogen utilization via the assimilation of allantoin. Catalyzes the transfer of a phosphate group from carbamoyl phosphate to ADP to produce ATP and leave carbamate, which spontaneously hydrolyzes to ammonia and hydrogencarbonate. The protein is Carbamate kinase of Escherichia coli O157:H7.